The primary structure comprises 230 residues: Flagellar L-ring protein (230 aa).

An N-terminal signal peptide occupies residues 1-26; the sequence is MKQVRLLPSATVRAACAVAVAAFAAG. Cysteine 27 is lipidated: N-palmitoyl cysteine. The S-diacylglycerol cysteine moiety is linked to residue cysteine 27.

It belongs to the FlgH family. In terms of assembly, the basal body constitutes a major portion of the flagellar organelle and consists of four rings (L,P,S, and M) mounted on a central rod.

It localises to the cell outer membrane. It is found in the bacterial flagellum basal body. Its function is as follows. Assembles around the rod to form the L-ring and probably protects the motor/basal body from shearing forces during rotation. The sequence is that of Flagellar L-ring protein from Burkholderia lata (strain ATCC 17760 / DSM 23089 / LMG 22485 / NCIMB 9086 / R18194 / 383).